The following is a 347-amino-acid chain: MTDICTICHNTPNRPVRLDCNHEFCYICIKGSIQNDMLNCAVCRRPFDSSIILNLSAQVCLKGDAPRDVDDDEEEVQDEEIDVKPDVNLLRAAMNANQNGNRELVAAAPHMNNNGNFHNAQGNYQVPTTSQGMVNQFGWPQFQAHSDFPYTLGYWGNQFPPFWNNAARNWGDVQQAANPVFAGNNQFLGNTQYNVFPPGQMGLPLPTTNIKMDIRDDEQNSVGGQQGMQTPTAGSDVPTAAQYNVQANFNVARVKFFWLYSSRGDGWWRFDQRCEKDIEDEFLANKPNMEMYLFGKPYILDFVAMRQWQKGNLDAWRQIKRVTSSEFDMHNVKGIAGCHVPNVWTVD.

The segment at 5-44 adopts an RING-type zinc-finger fold; the sequence is CTICHNTPNRPVRLDCNHEFCYICIKGSIQNDMLNCAVCR. The 78-residue stretch at 244 to 321 folds into the WWE domain; that stretch reads NVQANFNVAR…NLDAWRQIKR (78 aa).

This is an uncharacterized protein from Caenorhabditis elegans.